Consider the following 230-residue polypeptide: Cytidylate kinase (230 aa).

12-20 serves as a coordination point for ATP; that stretch reads GPSGAGKGT.

The protein belongs to the cytidylate kinase family. Type 1 subfamily.

The protein resides in the cytoplasm. It catalyses the reaction CMP + ATP = CDP + ADP. It carries out the reaction dCMP + ATP = dCDP + ADP. The polypeptide is Cytidylate kinase (Shewanella putrefaciens (strain CN-32 / ATCC BAA-453)).